The primary structure comprises 138 residues: Ribosome-binding factor A (138 aa).

Residues V116 to E138 form a disordered region.

The protein belongs to the RbfA family. Monomer. Binds 30S ribosomal subunits, but not 50S ribosomal subunits or 70S ribosomes.

It localises to the cytoplasm. In terms of biological role, one of several proteins that assist in the late maturation steps of the functional core of the 30S ribosomal subunit. Associates with free 30S ribosomal subunits (but not with 30S subunits that are part of 70S ribosomes or polysomes). Required for efficient processing of 16S rRNA. May interact with the 5'-terminal helix region of 16S rRNA. The polypeptide is Ribosome-binding factor A (Pseudomonas syringae pv. tomato (strain ATCC BAA-871 / DC3000)).